The following is a 114-amino-acid chain: FK506-binding protein 1 (114 aa).

One can recognise a PPIase FKBP-type domain in the interval 26–114; it reads GDLVTIHYTG…IFEVELLKVN (89 aa).

The protein belongs to the FKBP-type PPIase family. FKBP1 subfamily.

It is found in the cytoplasm. It carries out the reaction [protein]-peptidylproline (omega=180) = [protein]-peptidylproline (omega=0). Its activity is regulated as follows. Inhibited by both FK506 and rapamycin. Functionally, PPIases accelerate the folding of proteins. It catalyzes the cis-trans isomerization of proline imidic peptide bonds in oligopeptides. The sequence is that of FK506-binding protein 1 (FPR1) from Eremothecium gossypii (strain ATCC 10895 / CBS 109.51 / FGSC 9923 / NRRL Y-1056) (Yeast).